A 474-amino-acid polypeptide reads, in one-letter code: Probable dipeptidase B (474 aa).

Residue C11 is part of the active site.

The protein belongs to the peptidase C69 family.

The enzyme catalyses an L-aminoacyl-L-amino acid + H2O = 2 an L-alpha-amino acid. This chain is Probable dipeptidase B (pepDB), found in Lactococcus lactis subsp. lactis (strain IL1403) (Streptococcus lactis).